The chain runs to 598 residues: Vacuolin-A (598 aa).

Residues 482-539 (IKTTEARLKAETDNIALEQRNKAIISESQAKLSSAQREAESLLITAEAQKKASELQGE) adopt a coiled-coil conformation.

This sequence belongs to the vacuolin family.

It is found in the endosome membrane. The protein localises to the lysosome. This Dictyostelium discoideum (Social amoeba) protein is Vacuolin-A (vacA).